The sequence spans 328 residues: DNA-directed RNA polymerase subunit alpha (328 aa).

Residues 1–231 form an alpha N-terminal domain (alpha-NTD) region; it reads MIYQMQMPAK…EHVTFFADFS (231 aa). The segment at 252–328 is alpha C-terminal domain (alpha-CTD); that stretch reads MRKLFNTKIE…MDITKYQMKG (77 aa).

The protein belongs to the RNA polymerase alpha chain family. In terms of assembly, homodimer. The RNAP catalytic core consists of 2 alpha, 1 beta, 1 beta' and 1 omega subunit. When a sigma factor is associated with the core the holoenzyme is formed, which can initiate transcription.

It carries out the reaction RNA(n) + a ribonucleoside 5'-triphosphate = RNA(n+1) + diphosphate. Functionally, DNA-dependent RNA polymerase catalyzes the transcription of DNA into RNA using the four ribonucleoside triphosphates as substrates. This chain is DNA-directed RNA polymerase subunit alpha, found in Chlorobium limicola (strain DSM 245 / NBRC 103803 / 6330).